Reading from the N-terminus, the 134-residue chain is NADH-quinone oxidoreductase subunit A (134 aa).

Transmembrane regions (helical) follow at residues 14-34 (FFMF…LSWI), 66-86 (FYLI…LYAW), and 96-116 (IGFS…FYLV).

The protein belongs to the complex I subunit 3 family. As to quaternary structure, NDH-1 is composed of 13 different subunits. Subunits NuoA, H, J, K, L, M, N constitute the membrane sector of the complex.

The protein resides in the cell membrane. It catalyses the reaction a quinone + NADH + 5 H(+)(in) = a quinol + NAD(+) + 4 H(+)(out). Functionally, NDH-1 shuttles electrons from NADH, via FMN and iron-sulfur (Fe-S) centers, to quinones in the respiratory chain. The immediate electron acceptor for the enzyme in this species is believed to be ubiquinone. Couples the redox reaction to proton translocation (for every two electrons transferred, four hydrogen ions are translocated across the cytoplasmic membrane), and thus conserves the redox energy in a proton gradient. The polypeptide is NADH-quinone oxidoreductase subunit A (Buchnera aphidicola subsp. Acyrthosiphon pisum (strain APS) (Acyrthosiphon pisum symbiotic bacterium)).